A 209-amino-acid polypeptide reads, in one-letter code: MEISEKWIRHYSSTHKILLVGEGNFSFSLCLASAFGSAMNITATSLDSEDELSIKYMDAVDNINILKRYGCDIQHEVDVHTMSFDNSLSLQRYDRIVFNFPHAGSRFFGRELSSRAIESHKELVRGFLENAKEMLEEDGEIHITHKTTYPFSDWGIKKLGKGEGLKLLKKSKFELSHYPGYITKRGSGGRRSDDYFPVGECSTYMFTQS.

This is an uncharacterized protein from Arabidopsis thaliana (Mouse-ear cress).